A 95-amino-acid polypeptide reads, in one-letter code: Small ribosomal subunit protein uS19 (95 aa).

This sequence belongs to the universal ribosomal protein uS19 family.

In terms of biological role, protein S19 forms a complex with S13 that binds strongly to the 16S ribosomal RNA. The sequence is that of Small ribosomal subunit protein uS19 from Coxiella burnetii (strain CbuK_Q154) (Coxiella burnetii (strain Q154)).